Here is a 236-residue protein sequence, read N- to C-terminus: Phosphoribosylaminoimidazole-succinocarboxamide synthase (236 aa).

This sequence belongs to the SAICAR synthetase family.

It catalyses the reaction 5-amino-1-(5-phospho-D-ribosyl)imidazole-4-carboxylate + L-aspartate + ATP = (2S)-2-[5-amino-1-(5-phospho-beta-D-ribosyl)imidazole-4-carboxamido]succinate + ADP + phosphate + 2 H(+). It participates in purine metabolism; IMP biosynthesis via de novo pathway; 5-amino-1-(5-phospho-D-ribosyl)imidazole-4-carboxamide from 5-amino-1-(5-phospho-D-ribosyl)imidazole-4-carboxylate: step 1/2. The polypeptide is Phosphoribosylaminoimidazole-succinocarboxamide synthase (Lysinibacillus sphaericus (strain C3-41)).